Here is a 75-residue protein sequence, read N- to C-terminus: UPF0057 membrane protein At2g24040 (75 aa).

2 helical membrane passes run 4-24 and 33-53; these read SCEL…GVCL and FFIC…YAIY.

Belongs to the UPF0057 (PMP3) family.

Its subcellular location is the membrane. The sequence is that of UPF0057 membrane protein At2g24040 from Arabidopsis thaliana (Mouse-ear cress).